The following is a 280-amino-acid chain: Adenosylcobinamide-GDP ribazoletransferase (280 aa).

6 helical membrane passes run 4 to 24 (YLLA…GISM), 39 to 59 (VVGA…QVIF), 61 to 81 (GPVL…FNHL), 108 to 128 (TIGT…YGSI), 196 to 216 (FLIG…WIGL), and 255 to 275 (TALI…MGGF).

This sequence belongs to the CobS family. Mg(2+) serves as cofactor.

Its subcellular location is the cell membrane. It catalyses the reaction alpha-ribazole + adenosylcob(III)inamide-GDP = adenosylcob(III)alamin + GMP + H(+). The catalysed reaction is alpha-ribazole 5'-phosphate + adenosylcob(III)inamide-GDP = adenosylcob(III)alamin 5'-phosphate + GMP + H(+). It participates in cofactor biosynthesis; adenosylcobalamin biosynthesis; adenosylcobalamin from cob(II)yrinate a,c-diamide: step 7/7. Functionally, joins adenosylcobinamide-GDP and alpha-ribazole to generate adenosylcobalamin (Ado-cobalamin). Also synthesizes adenosylcobalamin 5'-phosphate from adenosylcobinamide-GDP and alpha-ribazole 5'-phosphate. In Methanosarcina barkeri (strain Fusaro / DSM 804), this protein is Adenosylcobinamide-GDP ribazoletransferase.